The primary structure comprises 2193 residues: Protein sidekick-1 (2193 aa).

The span at 1–23 (MARARPSVAGGGVAAPPERAGPG) shows a compositional bias: low complexity. Residues 1–56 (MARARPSVAGGGVAAPPERAGPGRPRRSRTGHHCDPECPGLRAAPRTPGPGAGRRA) are disordered. 5 Ig-like C2-type domains span residues 86-168 (PYFK…SEIQ), 173-259 (GNFM…SPFI), 275-363 (PIIV…AFLS), 368-458 (PYFT…LDVT), and 462-551 (PAFT…AMLT). A disulfide bond links Cys-108 and Cys-151. Asn-123, Asn-253, and Asn-283 each carry an N-linked (GlcNAc...) asparagine glycan. Intrachain disulfides connect Cys-297-Cys-344, Cys-390-Cys-440, and Cys-483-Cys-535. Asn-532, Asn-545, and Asn-554 each carry an N-linked (GlcNAc...) asparagine glycan. The Ig-like C2-type 6 domain occupies 556 to 645 (TSIVHPPEDR…GSDSRTARLE (90 aa)). Cys-577 and Cys-629 are oxidised to a cystine. Fibronectin type-III domains are found at residues 652-748 (PPQN…LPEE), 753-849 (PPKN…TLQG), 854-952 (PPQN…THED), 956-1050 (AVGH…VPPD), 1054-1153 (APSN…TLQA), 1158-1256 (APTS…TRES), 1261-1358 (APEN…TKDD), 1362-1456 (PPVR…TEKR), 1461-1558 (PPRE…TLQD), 1563-1681 (PPGS…VGEA), 1686-1782 (APQN…THQA), 1786-1881 (PPSF…AGPA), and 1884-1982 (SPGS…SAQA). N-linked (GlcNAc...) asparagine glycosylation is found at Asn-764, Asn-803, Asn-864, Asn-997, and Asn-1006. Residues Asn-1264 and Asn-1315 are each glycosylated (N-linked (GlcNAc...) asparagine). N-linked (GlcNAc...) asparagine glycosylation is found at Asn-1636, Asn-1730, Asn-1801, and Asn-1875. Residues 1992-2012 (FLLVMALSSLLLILLVVFVLV) traverse the membrane as a helical segment. Over 2013–2193 (LHGQSKKYKS…APLTGFSSFV (181 aa)) the chain is Cytoplasmic. A disordered region spans residues 2057–2080 (STFSKKNGTRSPPRPSPGGLHYSD). The short motif at 2187-2193 (TGFSSFV) is the PDZ-binding element.

It belongs to the sidekick family. In terms of assembly, homodimer; mediates homophilic interactions to promote cell adhesion. Interacts (via PDZ-binding motif) with MAGI1, MAGI2, DLG2, DLG3 and DLG4. As to quaternary structure, does not mediate homophilic interactions. Expressed by non-overlapping subsets of retinal neurons. Sdk1 and Sdk2 are expressed in non-overlapping subsets of interneurons and retinal ganglion cells (RGCs) that form synapses in distinct inner plexiform layer (IPL) sublaminae (at protein level).

The protein localises to the cell membrane. It localises to the synapse. Functionally, adhesion molecule that promotes lamina-specific synaptic connections in the retina. Expressed in specific subsets of interneurons and retinal ganglion cells (RGCs) and promotes synaptic connectivity via homophilic interactions. This chain is Protein sidekick-1, found in Mus musculus (Mouse).